Reading from the N-terminus, the 227-residue chain is Uracil phosphoribosyltransferase (227 aa).

Position 36-40 (36-40) interacts with GTP; sequence KGLVK. Residues R86, R111, and 145–153 each bind 5-phospho-alpha-D-ribose 1-diphosphate; that span reads DPMLATGST. Residues I212 and 217-219 each bind uracil; that span reads GDA. D218 serves as a coordination point for 5-phospho-alpha-D-ribose 1-diphosphate.

Belongs to the UPRTase family. Mg(2+) is required as a cofactor.

The catalysed reaction is UMP + diphosphate = 5-phospho-alpha-D-ribose 1-diphosphate + uracil. It participates in pyrimidine metabolism; UMP biosynthesis via salvage pathway; UMP from uracil: step 1/1. Allosterically activated by GTP. In terms of biological role, catalyzes the conversion of uracil and 5-phospho-alpha-D-ribose 1-diphosphate (PRPP) to UMP and diphosphate. The protein is Uracil phosphoribosyltransferase of Halobacterium salinarum (strain ATCC 700922 / JCM 11081 / NRC-1) (Halobacterium halobium).